A 266-amino-acid chain; its full sequence is Hydroxyethylthiazole kinase (266 aa).

Position 41 (Met41) interacts with substrate. Residues Arg117 and Ser163 each coordinate ATP. Ala190 contacts substrate.

This sequence belongs to the Thz kinase family. Mg(2+) serves as cofactor.

The catalysed reaction is 5-(2-hydroxyethyl)-4-methylthiazole + ATP = 4-methyl-5-(2-phosphooxyethyl)-thiazole + ADP + H(+). It participates in cofactor biosynthesis; thiamine diphosphate biosynthesis; 4-methyl-5-(2-phosphoethyl)-thiazole from 5-(2-hydroxyethyl)-4-methylthiazole: step 1/1. Catalyzes the phosphorylation of the hydroxyl group of 4-methyl-5-beta-hydroxyethylthiazole (THZ). This is Hydroxyethylthiazole kinase from Histophilus somni (strain 129Pt) (Haemophilus somnus).